A 339-amino-acid chain; its full sequence is tRNA-dihydrouridine(20/20a) synthase (339 aa).

FMN is bound by residues 26–28 and Gln78; that span reads PML. Cys108 serves as the catalytic Proton donor. FMN is bound by residues Lys147, His180, 220–222, and 242–243; these read NGG and GR.

It belongs to the Dus family. DusA subfamily. FMN is required as a cofactor.

It carries out the reaction 5,6-dihydrouridine(20) in tRNA + NADP(+) = uridine(20) in tRNA + NADPH + H(+). It catalyses the reaction 5,6-dihydrouridine(20) in tRNA + NAD(+) = uridine(20) in tRNA + NADH + H(+). The enzyme catalyses 5,6-dihydrouridine(20a) in tRNA + NADP(+) = uridine(20a) in tRNA + NADPH + H(+). The catalysed reaction is 5,6-dihydrouridine(20a) in tRNA + NAD(+) = uridine(20a) in tRNA + NADH + H(+). In terms of biological role, catalyzes the synthesis of 5,6-dihydrouridine (D), a modified base found in the D-loop of most tRNAs, via the reduction of the C5-C6 double bond in target uridines. Specifically modifies U20 and U20a in tRNAs. This is tRNA-dihydrouridine(20/20a) synthase from Shigella flexneri.